The sequence spans 615 residues: Fibrinogen alpha chain (615 aa).

The N-terminal stretch at M1–T19 is a signal peptide. The stretch at C71–G602 forms a coiled coil. A disordered region spans residues F267–L427. Over residues G293–P302 the composition is skewed to polar residues. T325 carries O-linked (GalNAc...) threonine glycosylation. Residues G373–G396 are compositionally biased toward low complexity. C455 and C485 form a disulfide bridge. Residues E530 to P615 form a disordered region. Positions S537–K549 are enriched in low complexity. A compositionally biased stretch (polar residues) spans Q550–R560. Residues Q591–R601 show a composition bias toward basic residues.

As to quaternary structure, heterohexamer; disulfide linked. Contains 2 sets of 3 non-identical chains (alpha, beta and gamma). The 2 heterotrimers are in head to head conformation with the N-termini in a small central domain. In terms of processing, conversion of fibrinogen to fibrin is triggered by thrombin, which cleaves fibrinopeptides A and B from alpha and beta chains, and thus exposes the N-terminal polymerization sites responsible for the formation of the soft clot. The soft clot is converted into the hard clot by factor XIIIA which catalyzes the epsilon-(gamma-glutamyl)lysine cross-linking between gamma chains (stronger) and between alpha chains (weaker) of different monomers. Forms F13A-mediated cross-links between a glutamine and the epsilon-amino group of a lysine residue, forming fibronectin-fibrinogen heteropolymers.

Its subcellular location is the secreted. In terms of biological role, cleaved by the protease thrombin to yield monomers which, together with fibrinogen beta (FGB) and fibrinogen gamma (FGG), polymerize to form an insoluble fibrin matrix. Fibrin has a major function in hemostasis as one of the primary components of blood clots. In addition, functions during the early stages of wound repair to stabilize the lesion and guide cell migration during re-epithelialization. Was originally thought to be essential for platelet aggregation, based on in vitro studies using anticoagulated blood. However, subsequent studies have shown that it is not absolutely required for thrombus formation in vivo. Enhances expression of SELP in activated platelets via an ITGB3-dependent pathway. Maternal fibrinogen is essential for successful pregnancy. Fibrin deposition is also associated with infection, where it protects against IFNG-mediated hemorrhage. May also facilitate the immune response via both innate and T-cell mediated pathways. In Bos taurus (Bovine), this protein is Fibrinogen alpha chain (FGA).